Reading from the N-terminus, the 102-residue chain is MEPVDPRLEPWNHPGSQPKTACNKCYCKKCCYHCMCCFTKKGLGISYGRKKRSQRRRPPKSSKDHQDPIPEQPLSRQQPGDQTGQKKQKKALEGKTEADPCD.

The segment covering 1–10 has biased composition (basic and acidic residues); sequence MEPVDPRLEP. The interval 1–20 is disordered; it reads MEPVDPRLEPWNHPGSQPKT. The interaction with human CREBBP stretch occupies residues 1–24; sequence MEPVDPRLEPWNHPGSQPKTACNK. The segment at 1–48 is transactivation; it reads MEPVDPRLEPWNHPGSQPKTACNKCYCKKCCYHCMCCFTKKGLGISYG. Zn(2+)-binding residues include C22, C25, and C27. Residues 22–37 are cysteine-rich; it reads CNKCYCKKCCYHCMCC. K28 bears the N6-acetyllysine; by host PCAF mark. Zn(2+) contacts are provided by C30, H33, C34, and C37. The tract at residues 38–48 is core; the sequence is FTKKGLGISYG. Residues 47-102 are disordered; the sequence is YGRKKRSQRRRPPKSSKDHQDPIPEQPLSRQQPGDQTGQKKQKKALEGKTEADPCD. Residues 48–60 are compositionally biased toward basic residues; it reads GRKKRSQRRRPPK. Positions 49 to 57 match the Nuclear localization signal, RNA-binding (TAR), and protein transduction motif; it reads RKKRSQRRR. The interaction with the host capping enzyme RNGTT stretch occupies residues 49 to 87; the sequence is RKKRSQRRRPPKSSKDHQDPIPEQPLSRQQPGDQTGQKK. K50 and K51 each carry N6-acetyllysine; by host EP300 and GCN5L2. R52 is modified (asymmetric dimethylarginine; by host PRMT6). The segment covering 74–85 has biased composition (polar residues); it reads LSRQQPGDQTGQ. Over residues 90-102 the composition is skewed to basic and acidic residues; that stretch reads KALEGKTEADPCD.

It belongs to the lentiviruses Tat family. As to quaternary structure, interacts with host CCNT1. Associates with the P-TEFb complex composed at least of Tat, P-TEFb (CDK9 and CCNT1), TAR RNA, RNA Pol II. Recruits the HATs CREBBP, TAF1/TFIID, EP300, PCAF and GCN5L2. Interacts with host KAT5/Tip60; this interaction targets the latter to degradation. Interacts with the host deacetylase SIRT1. Interacts with host capping enzyme RNGTT; this interaction stimulates RNGTT. Binds to host KDR, and to the host integrins ITGAV/ITGB3 and ITGA5/ITGB1. Interacts with host KPNB1/importin beta-1 without previous binding to KPNA1/importin alpha-1. Interacts with EIF2AK2. Interacts with host nucleosome assembly protein NAP1L1; this interaction may be required for the transport of Tat within the nucleus, since the two proteins interact at the nuclear rim. Interacts with host C1QBP/SF2P32; this interaction involves lysine-acetylated Tat. Interacts with the host chemokine receptors CCR2, CCR3 and CXCR4. Interacts with host DPP4/CD26; this interaction may trigger an anti-proliferative effect. Interacts with host LDLR. Interacts with the host extracellular matrix metalloproteinase MMP1. Interacts with host PRMT6; this interaction mediates Tat's methylation. Interacts with, and is ubiquitinated by MDM2/Hdm2. Interacts with host PSMC3 and HTATIP2. Interacts with STAB1; this interaction may overcome SATB1-mediated repression of IL2 and IL2RA (interleukin) in T cells by binding to the same domain than HDAC1. Interacts (when acetylated) with human CDK13, thereby increasing HIV-1 mRNA splicing and promoting the production of the doubly spliced HIV-1 protein Nef. Interacts with host TBP; this interaction modulates the activity of transcriptional pre-initiation complex. Interacts with host RELA. Interacts with host PLSCR1; this interaction negatively regulates Tat transactivation activity by altering its subcellular distribution. Asymmetrical arginine methylation by host PRMT6 seems to diminish the transactivation capacity of Tat and affects the interaction with host CCNT1. In terms of processing, acetylation by EP300, CREBBP, GCN5L2/GCN5 and PCAF regulates the transactivation activity of Tat. EP300-mediated acetylation of Lys-50 promotes dissociation of Tat from the TAR RNA through the competitive binding to PCAF's bromodomain. In addition, the non-acetylated Tat's N-terminus can also interact with PCAF. PCAF-mediated acetylation of Lys-28 enhances Tat's binding to CCNT1. Lys-50 is deacetylated by SIRT1. Post-translationally, polyubiquitination by host MDM2 does not target Tat to degradation, but activates its transactivation function and fosters interaction with CCNT1 and TAR RNA. Phosphorylated by EIF2AK2 on serine and threonine residues adjacent to the basic region important for TAR RNA binding and function. Phosphorylation of Tat by EIF2AK2 is dependent on the prior activation of EIF2AK2 by dsRNA.

It localises to the host nucleus. It is found in the host nucleolus. Its subcellular location is the host cytoplasm. The protein resides in the secreted. In terms of biological role, transcriptional activator that increases RNA Pol II processivity, thereby increasing the level of full-length viral transcripts. Recognizes a hairpin structure at the 5'-LTR of the nascent viral mRNAs referred to as the transactivation responsive RNA element (TAR) and recruits the cyclin T1-CDK9 complex (P-TEFb complex) that will in turn hyperphosphorylate the RNA polymerase II to allow efficient elongation. The CDK9 component of P-TEFb and other Tat-activated kinases hyperphosphorylate the C-terminus of RNA Pol II that becomes stabilized and much more processive. Other factors such as HTATSF1/Tat-SF1, SUPT5H/SPT5, and HTATIP2 are also important for Tat's function. Besides its effect on RNA Pol II processivity, Tat induces chromatin remodeling of proviral genes by recruiting the histone acetyltransferases (HATs) CREBBP, EP300 and PCAF to the chromatin. This also contributes to the increase in proviral transcription rate, especially when the provirus integrates in transcriptionally silent region of the host genome. To ensure maximal activation of the LTR, Tat mediates nuclear translocation of NF-kappa-B by interacting with host RELA. Through its interaction with host TBP, Tat may also modulate transcription initiation. Tat can reactivate a latently infected cell by penetrating in it and transactivating its LTR promoter. In the cytoplasm, Tat is thought to act as a translational activator of HIV-1 mRNAs. Extracellular circulating Tat can be endocytosed by surrounding uninfected cells via the binding to several surface receptors such as CD26, CXCR4, heparan sulfate proteoglycans (HSPG) or LDLR. Neurons are rarely infected, but they internalize Tat via their LDLR. Through its interaction with nuclear HATs, Tat is potentially able to control the acetylation-dependent cellular gene expression. Modulates the expression of many cellular genes involved in cell survival, proliferation or in coding for cytokines or cytokine receptors. Tat plays a role in T-cell and neurons apoptosis. Tat induced neurotoxicity and apoptosis probably contribute to neuroAIDS. Circulating Tat also acts as a chemokine-like and/or growth factor-like molecule that binds to specific receptors on the surface of the cells, affecting many cellular pathways. In the vascular system, Tat binds to ITGAV/ITGB3 and ITGA5/ITGB1 integrins dimers at the surface of endothelial cells and competes with bFGF for heparin-binding sites, leading to an excess of soluble bFGF. The sequence is that of Protein Tat from Human immunodeficiency virus type 1 group N (isolate YBF106) (HIV-1).